An 80-amino-acid polypeptide reads, in one-letter code: Large ribosomal subunit protein uL24 (80 aa).

The protein belongs to the universal ribosomal protein uL24 family. Part of the 50S ribosomal subunit.

One of two assembly initiator proteins, it binds directly to the 5'-end of the 23S rRNA, where it nucleates assembly of the 50S subunit. Its function is as follows. One of the proteins that surrounds the polypeptide exit tunnel on the outside of the subunit. The polypeptide is Large ribosomal subunit protein uL24 (Chlorobium phaeovibrioides (strain DSM 265 / 1930) (Prosthecochloris vibrioformis (strain DSM 265))).